Here is a 220-residue protein sequence, read N- to C-terminus: DNA-directed RNA polymerase subunit alpha (220 aa).

This sequence belongs to the RNA polymerase alpha chain family. In terms of assembly, in plastids the minimal PEP RNA polymerase catalytic core is composed of four subunits: alpha, beta, beta', and beta''. When a (nuclear-encoded) sigma factor is associated with the core the holoenzyme is formed, which can initiate transcription.

The protein localises to the plastid. It carries out the reaction RNA(n) + a ribonucleoside 5'-triphosphate = RNA(n+1) + diphosphate. Its function is as follows. DNA-dependent RNA polymerase catalyzes the transcription of DNA into RNA using the four ribonucleoside triphosphates as substrates. This is DNA-directed RNA polymerase subunit alpha (rpoA) from Euglena longa (Euglenophycean alga).